A 1164-amino-acid chain; its full sequence is Protein PLASTID MOVEMENT IMPAIRED 1-RELATED 1 (1164 aa).

A disordered region spans residues 30–54 (KNPRGSVAGSNKTPTKPLSRSNLAE). Residues 37–51 (AGSNKTPTKPLSRSN) are compositionally biased toward polar residues. Residues 69–217 (INHVRNRRFN…TLSMSFGYTV (149 aa)) form the C2 NT-type domain. Polar residues predominate over residues 224 to 263 (PASSGSTQNFRSSSNVKQTSNNTGLTRAISAKSSLGNGKS). 4 disordered regions span residues 224–268 (PASS…SRRY), 466–486 (APEE…PKDA), 1038–1063 (SELK…PMEE), and 1124–1164 (GSAK…IMPK). 2 stretches are compositionally biased toward basic and acidic residues: residues 469-486 (EGNK…PKDA) and 1052-1062 (SDAKKEEKPME).

The protein resides in the cytoplasm. In terms of biological role, together with PMI1, necessary for chloroplast and nuclear photorelocation movements via the regulation of chloroplast-actin (cp-actin) filaments in pavement cells. This Arabidopsis thaliana (Mouse-ear cress) protein is Protein PLASTID MOVEMENT IMPAIRED 1-RELATED 1.